A 509-amino-acid polypeptide reads, in one-letter code: Lysine--tRNA ligase (509 aa).

Glu-418 and Glu-425 together coordinate Mg(2+).

It belongs to the class-II aminoacyl-tRNA synthetase family. Homodimer. It depends on Mg(2+) as a cofactor.

The protein localises to the cytoplasm. It catalyses the reaction tRNA(Lys) + L-lysine + ATP = L-lysyl-tRNA(Lys) + AMP + diphosphate. The chain is Lysine--tRNA ligase from Acinetobacter baumannii (strain AB307-0294).